We begin with the raw amino-acid sequence, 343 residues long: Ribosomal RNA small subunit methyltransferase C (343 aa).

Belongs to the methyltransferase superfamily. RsmC family. Monomer.

Its subcellular location is the cytoplasm. The catalysed reaction is guanosine(1207) in 16S rRNA + S-adenosyl-L-methionine = N(2)-methylguanosine(1207) in 16S rRNA + S-adenosyl-L-homocysteine + H(+). Specifically methylates the guanine in position 1207 of 16S rRNA in the 30S particle. This chain is Ribosomal RNA small subunit methyltransferase C, found in Escherichia coli O6:K15:H31 (strain 536 / UPEC).